Reading from the N-terminus, the 290-residue chain is Acetyl-coenzyme A carboxylase carboxyl transferase subunit beta (290 aa).

The CoA carboxyltransferase N-terminal domain occupies 27–290 (LWVKCPSCES…LQKQPADAVA (264 aa)). Residues Cys-31, Cys-34, Cys-50, and Cys-53 each coordinate Zn(2+). The segment at 31 to 53 (CPSCESTLYRTDVEANLHVCPKC) adopts a C4-type zinc-finger fold.

It belongs to the AccD/PCCB family. Acetyl-CoA carboxylase is a heterohexamer composed of biotin carboxyl carrier protein (AccB), biotin carboxylase (AccC) and two subunits each of ACCase subunit alpha (AccA) and ACCase subunit beta (AccD). It depends on Zn(2+) as a cofactor.

It is found in the cytoplasm. It carries out the reaction N(6)-carboxybiotinyl-L-lysyl-[protein] + acetyl-CoA = N(6)-biotinyl-L-lysyl-[protein] + malonyl-CoA. Its pathway is lipid metabolism; malonyl-CoA biosynthesis; malonyl-CoA from acetyl-CoA: step 1/1. Functionally, component of the acetyl coenzyme A carboxylase (ACC) complex. Biotin carboxylase (BC) catalyzes the carboxylation of biotin on its carrier protein (BCCP) and then the CO(2) group is transferred by the transcarboxylase to acetyl-CoA to form malonyl-CoA. This chain is Acetyl-coenzyme A carboxylase carboxyl transferase subunit beta, found in Cupriavidus taiwanensis (strain DSM 17343 / BCRC 17206 / CCUG 44338 / CIP 107171 / LMG 19424 / R1) (Ralstonia taiwanensis (strain LMG 19424)).